The sequence spans 225 residues: Cytidylate kinase (225 aa).

Residue 11–19 (GPAGAGKST) participates in ATP binding.

Belongs to the cytidylate kinase family. Type 1 subfamily.

Its subcellular location is the cytoplasm. The enzyme catalyses CMP + ATP = CDP + ADP. It carries out the reaction dCMP + ATP = dCDP + ADP. The polypeptide is Cytidylate kinase (Shouchella clausii (strain KSM-K16) (Alkalihalobacillus clausii)).